The following is a 454-amino-acid chain: UDP-N-acetylmuramoylalanine--D-glutamate ligase (454 aa).

119 to 125 (GSNGKTT) serves as a coordination point for ATP.

This sequence belongs to the MurCDEF family.

It localises to the cytoplasm. It carries out the reaction UDP-N-acetyl-alpha-D-muramoyl-L-alanine + D-glutamate + ATP = UDP-N-acetyl-alpha-D-muramoyl-L-alanyl-D-glutamate + ADP + phosphate + H(+). It functions in the pathway cell wall biogenesis; peptidoglycan biosynthesis. Functionally, cell wall formation. Catalyzes the addition of glutamate to the nucleotide precursor UDP-N-acetylmuramoyl-L-alanine (UMA). The chain is UDP-N-acetylmuramoylalanine--D-glutamate ligase from Latilactobacillus sakei subsp. sakei (strain 23K) (Lactobacillus sakei subsp. sakei).